Here is a 313-residue protein sequence, read N- to C-terminus: Ribosomal RNA small subunit methyltransferase H (313 aa).

Residues 48-50 (GGH), Asp68, Phe102, Asp120, and Gln127 contribute to the S-adenosyl-L-methionine site. The segment at 290–313 (TATEEEIDRNPRSRSAKLRAAARK) is disordered. Over residues 301 to 313 (RSRSAKLRAAARK) the composition is skewed to basic residues.

The protein belongs to the methyltransferase superfamily. RsmH family.

Its subcellular location is the cytoplasm. It carries out the reaction cytidine(1402) in 16S rRNA + S-adenosyl-L-methionine = N(4)-methylcytidine(1402) in 16S rRNA + S-adenosyl-L-homocysteine + H(+). In terms of biological role, specifically methylates the N4 position of cytidine in position 1402 (C1402) of 16S rRNA. The sequence is that of Ribosomal RNA small subunit methyltransferase H from Koribacter versatilis (strain Ellin345).